A 421-amino-acid chain; its full sequence is Magnesium transporter MRS2-5 (421 aa).

2 consecutive transmembrane segments (helical) span residues 357–377 and 393–413; these read LLLT…AVFG and YVLL…VLYF. Positions 377 to 379 match the Required for magnesium transport activity motif; that stretch reads GMN.

This sequence belongs to the CorA metal ion transporter (MIT) (TC 1.A.35.5) family. As to expression, expressed in the whole plant.

It is found in the membrane. Functionally, magnesium transporter that may mediate the influx of magnesium. The sequence is that of Magnesium transporter MRS2-5 (MRS2-5) from Arabidopsis thaliana (Mouse-ear cress).